We begin with the raw amino-acid sequence, 353 residues long: MTFAPLQNDRFLRALNRETVDRTPIWMMRQAGRYLPEYRAAREHAGSFMDLCKNADLACEVTLQPLERYPLDAAILFSDILTIPDAMGLGLYFETGEGPKFRKVVRTEADVAALPIPDAESDLGYVMNAVSTIRGALNGRVPLIGFSGSPWTLATYMVEGGSSKDFRHLKAMVYSQPELAHAMLDKLAQSVTGYLNAQIRHGAQAVQIFDTWGGALSAEAYKEFSLRYMQQIVDGLIRDNEGRKVPVILFTKNGGLWLESMAATGCDALGLDWTINIGDARRRVGDKVALQGNMDPAVLYASPQAIRAEVKRILDDFGDHPGHIFNLGHGITPQVDPEHAKVFIEAVVELSQK.

Substrate-binding positions include 29–33 (RQAGR), Asp79, Tyr156, Thr211, and His329.

The protein belongs to the uroporphyrinogen decarboxylase family. Homodimer.

The protein resides in the cytoplasm. The enzyme catalyses uroporphyrinogen III + 4 H(+) = coproporphyrinogen III + 4 CO2. It functions in the pathway porphyrin-containing compound metabolism; protoporphyrin-IX biosynthesis; coproporphyrinogen-III from 5-aminolevulinate: step 4/4. In terms of biological role, catalyzes the decarboxylation of four acetate groups of uroporphyrinogen-III to yield coproporphyrinogen-III. This chain is Uroporphyrinogen decarboxylase, found in Alcanivorax borkumensis (strain ATCC 700651 / DSM 11573 / NCIMB 13689 / SK2).